The chain runs to 218 residues: Small ribosomal subunit protein uS3 (218 aa).

Residues Ile-38–Lys-106 enclose the KH type-2 domain.

This sequence belongs to the universal ribosomal protein uS3 family. As to quaternary structure, part of the 30S ribosomal subunit. Forms a tight complex with proteins S10 and S14.

Functionally, binds the lower part of the 30S subunit head. Binds mRNA in the 70S ribosome, positioning it for translation. This Anoxybacillus flavithermus (strain DSM 21510 / WK1) protein is Small ribosomal subunit protein uS3.